Here is a 990-residue protein sequence, read N- to C-terminus: Mediator of RNA polymerase II transcription subunit 5 (990 aa).

The protein belongs to the Mediator complex subunit 5 family. As to quaternary structure, component of the Mediator complex.

The protein resides in the nucleus. In terms of biological role, component of the Mediator complex, a coactivator involved in the regulated transcription of nearly all RNA polymerase II-dependent genes. Mediator functions as a bridge to convey information from gene-specific regulatory proteins to the basal RNA polymerase II transcription machinery. Mediator is recruited to promoters by direct interactions with regulatory proteins and serves as a scaffold for the assembly of a functional preinitiation complex with RNA polymerase II and the general transcription factors. This Debaryomyces hansenii (strain ATCC 36239 / CBS 767 / BCRC 21394 / JCM 1990 / NBRC 0083 / IGC 2968) (Yeast) protein is Mediator of RNA polymerase II transcription subunit 5 (NUT1).